Consider the following 160-residue polypeptide: CXXC motif containing zinc binding protein (160 aa).

Zn(2+) is bound by residues Cys-33, Cys-36, Cys-67, and Cys-70. Ser-75 is subject to Phosphoserine.

The protein belongs to the UPF0587 family. Monomer.

This is CXXC motif containing zinc binding protein (Czib) from Mus musculus (Mouse).